Reading from the N-terminus, the 591-residue chain is Aspartate--tRNA ligase (591 aa).

Residue Glu172 coordinates L-aspartate. The interval 196 to 199 (QLFK) is aspartate. Residue Arg218 participates in L-aspartate binding. Residues 218–220 (RDE) and Gln227 contribute to the ATP site. His449 serves as a coordination point for L-aspartate. Residue Glu483 coordinates ATP. Arg490 is an L-aspartate binding site. 535–538 (GLDR) is a binding site for ATP.

The protein belongs to the class-II aminoacyl-tRNA synthetase family. Type 1 subfamily. In terms of assembly, homodimer.

It localises to the cytoplasm. It catalyses the reaction tRNA(Asp) + L-aspartate + ATP = L-aspartyl-tRNA(Asp) + AMP + diphosphate. Its function is as follows. Catalyzes the attachment of L-aspartate to tRNA(Asp) in a two-step reaction: L-aspartate is first activated by ATP to form Asp-AMP and then transferred to the acceptor end of tRNA(Asp). The protein is Aspartate--tRNA ligase of Actinobacillus pleuropneumoniae serotype 7 (strain AP76).